Here is a 344-residue protein sequence, read N- to C-terminus: MKQTKTKYGKMKQIASNLKLPDYRYEQLTKAIFHQRIDNFHDMHILPKALRIALVNEFGKNVSSVTPIFSQDSKQAQKLLFELTDGERIEAVGLKYKQGWESFCISSQCGCSFGCRFCATGSAGFKRNLTADEITDQLLYFYFNDHRLNSISFMGMGEAFANPELFDAVKILTDQNLFGLSQRRITISTIGIIPGIQRLTKEFPQVNLAFSLHSPFESQRSDLMPINKRFPLNEVMKTLDEHIIHTGRRVFIAYIMLEGINDSKEHAEAIIGLLRNRGSWEHLYHIDLIPYNSTDKTTFKFQSSSAIKQFCSTLKKASISATVRTQFGSEISAACGQLCYENEL.

The active-site Proton acceptor is E90. The 234-residue stretch at 97-330 folds into the Radical SAM core domain; the sequence is KQGWESFCIS…ATVRTQFGSE (234 aa). Residues C104 and C335 are joined by a disulfide bond. [4Fe-4S] cluster-binding residues include C111, C115, and C118. Residues 157–158, S188, 211–213, and N292 each bind S-adenosyl-L-methionine; these read GE and SLH. Catalysis depends on C335, which acts as the S-methylcysteine intermediate.

It belongs to the radical SAM superfamily. RlmN family. Cfr subfamily. [4Fe-4S] cluster serves as cofactor.

The protein resides in the cytoplasm. It carries out the reaction adenosine(2503) in 23S rRNA + 2 reduced [2Fe-2S]-[ferredoxin] + 2 S-adenosyl-L-methionine = 8-methyladenosine(2503) in 23S rRNA + 5'-deoxyadenosine + L-methionine + 2 oxidized [2Fe-2S]-[ferredoxin] + S-adenosyl-L-homocysteine. In terms of biological role, specifically methylates position 8 of adenine 2503 in 23S rRNA. Confers resistance to some classes of antibiotics. This chain is Ribosomal RNA large subunit methyltransferase Cfr, found in Clostridium botulinum (strain Hall / ATCC 3502 / NCTC 13319 / Type A).